Reading from the N-terminus, the 169-residue chain is Ribosome maturation factor RimM (169 aa).

The PRC barrel domain occupies E97–Y169.

It belongs to the RimM family. As to quaternary structure, binds ribosomal protein uS19.

It localises to the cytoplasm. Its function is as follows. An accessory protein needed during the final step in the assembly of 30S ribosomal subunit, possibly for assembly of the head region. Essential for efficient processing of 16S rRNA. May be needed both before and after RbfA during the maturation of 16S rRNA. It has affinity for free ribosomal 30S subunits but not for 70S ribosomes. The chain is Ribosome maturation factor RimM from Neisseria meningitidis serogroup B (strain ATCC BAA-335 / MC58).